Here is a 95-residue protein sequence, read N- to C-terminus: Aspartyl/glutamyl-tRNA(Asn/Gln) amidotransferase subunit C (95 aa).

It belongs to the GatC family. In terms of assembly, heterotrimer of A, B and C subunits.

It catalyses the reaction L-glutamyl-tRNA(Gln) + L-glutamine + ATP + H2O = L-glutaminyl-tRNA(Gln) + L-glutamate + ADP + phosphate + H(+). It carries out the reaction L-aspartyl-tRNA(Asn) + L-glutamine + ATP + H2O = L-asparaginyl-tRNA(Asn) + L-glutamate + ADP + phosphate + 2 H(+). Functionally, allows the formation of correctly charged Asn-tRNA(Asn) or Gln-tRNA(Gln) through the transamidation of misacylated Asp-tRNA(Asn) or Glu-tRNA(Gln) in organisms which lack either or both of asparaginyl-tRNA or glutaminyl-tRNA synthetases. The reaction takes place in the presence of glutamine and ATP through an activated phospho-Asp-tRNA(Asn) or phospho-Glu-tRNA(Gln). This Geobacter sp. (strain M21) protein is Aspartyl/glutamyl-tRNA(Asn/Gln) amidotransferase subunit C.